Here is a 1035-residue protein sequence, read N- to C-terminus: Kinesin-like protein KIN-4A (1035 aa).

Residues 10–369 (CVKVAVHVRP…LKYANRARNI (360 aa)) form the Kinesin motor domain. 89-96 (GQTGSGKT) lines the ATP pocket. Coiled coils occupy residues 380-437 (VADE…LRNH) and 498-702 (MLQD…RKSS). 3 disordered regions span residues 697 to 720 (EARK…HMTE), 766 to 787 (VMSG…NTLS), and 882 to 928 (HSES…PLSP). Polar residues-rich tracts occupy residues 704-716 (RDNS…SPGS) and 778-787 (NGNSRANTLS). Residues 850 to 904 (NVAADARCQVREKEMEIKEMKEQMTELVTILRHSESRRRETEKQLKQREQAAVTA) adopt a coiled-coil conformation. Over residues 882–898 (HSESRRRETEKQLKQRE) the composition is skewed to basic and acidic residues. Over residues 902 to 926 (VTATTSPGNGNGSVKHSADDSNTPL) the composition is skewed to polar residues. The short motif at 971–987 (KKVSIAGQSGKLWRWKR) is the Nuclear localization signal element. A disordered region spans residues 1014-1035 (DETMTRTRPRPQLLPHRPQRVM).

Belongs to the TRAFAC class myosin-kinesin ATPase superfamily. Kinesin family. KIN-4 subfamily. Homodimer. Expressed in young tissues with cell divisions, including initiating adventitious roots, primary root tips, flower primordia, intercalary meristems, sub-epidermal regions of young culms and panicles.

It localises to the nucleus. Its subcellular location is the cytoplasm. The protein localises to the cytoskeleton. Its activity is regulated as follows. May be regulated by cyclin-dependent kinase A. Microtubule-dependent motor protein involved in the control of the oriented deposition of cellulose microfibrils. Involved in wall biogenesis and modification, and contributes to cell-cycle progression and cell division. Acts as a transcriptional activator in gibberellic acid (GA) biosynthesis pathway. Binds specifically to the DNA sequence 5'-ACCAACTTGAA-3' of the ent-kaurene oxidase 2 (CYP701A6 or OsKO2) promoter. May regulate CYP701A6 gene expression and mediates cell elongation by regulating the GA biosynthesis pathway. The sequence is that of Kinesin-like protein KIN-4A from Oryza sativa subsp. japonica (Rice).